A 330-amino-acid polypeptide reads, in one-letter code: 4-hydroxythreonine-4-phosphate dehydrogenase (330 aa).

Substrate is bound by residues His-134 and Thr-135. The a divalent metal cation site is built by His-163, His-208, and His-263. Residues Lys-271, Asn-280, and Arg-289 each contribute to the substrate site.

The protein belongs to the PdxA family. As to quaternary structure, homodimer. Requires Zn(2+) as cofactor. It depends on Mg(2+) as a cofactor. Co(2+) is required as a cofactor.

The protein resides in the cytoplasm. It carries out the reaction 4-(phosphooxy)-L-threonine + NAD(+) = 3-amino-2-oxopropyl phosphate + CO2 + NADH. Its pathway is cofactor biosynthesis; pyridoxine 5'-phosphate biosynthesis; pyridoxine 5'-phosphate from D-erythrose 4-phosphate: step 4/5. Its function is as follows. Catalyzes the NAD(P)-dependent oxidation of 4-(phosphooxy)-L-threonine (HTP) into 2-amino-3-oxo-4-(phosphooxy)butyric acid which spontaneously decarboxylates to form 3-amino-2-oxopropyl phosphate (AHAP). This Methylococcus capsulatus (strain ATCC 33009 / NCIMB 11132 / Bath) protein is 4-hydroxythreonine-4-phosphate dehydrogenase.